We begin with the raw amino-acid sequence, 198 residues long: Transcription factor FapR (198 aa).

One can recognise a MaoC-like domain in the interval 102 to 168; that stretch reads TRIARGHHLF…GRTVVDVNSY (67 aa).

Belongs to the FapR family.

Its function is as follows. Transcriptional factor involved in regulation of membrane lipid biosynthesis by repressing genes involved in fatty acid and phospholipid metabolism. The protein is Transcription factor FapR of Geobacillus thermodenitrificans (strain NG80-2).